The following is a 328-amino-acid chain: MKALVRVAVTGAAGQIGYSLLFRIAAGEMFGKDRPVILQMLELPDEKAQAALKGVMMELEDCAFPLLAGMVVTDNPDIAFKDADAALLVGSRPRGPGMERKDLLMENAKIFTAQGAALNKVARRDVKVLVVGNPANTNAYIAMKSAPDLNPKHFTAMLRLDHNRALSQLSTKLGKPVANIEKLIVWGNHSPTMYPDYRFATADGTPIIEAINDQAWNANSFIPTVSKRGAAIIEARGLSSAASAANAAIDHMRDWLLGSNGKWITMGVPSDGSYGIPEGMIFGFPVTTTNGEYSIVKDLPIDTFSKTYIDKTLAELEEERASIAHLLR.

11-17 (GAAGQIG) contributes to the NAD(+) binding site. Substrate is bound by residues arginine 94 and arginine 100. Residues asparagine 107, glutamine 114, and 131–133 (VGN) contribute to the NAD(+) site. 2 residues coordinate substrate: asparagine 133 and arginine 164. Residue histidine 189 is the Proton acceptor of the active site.

The protein belongs to the LDH/MDH superfamily. MDH type 2 family.

It carries out the reaction (S)-malate + NAD(+) = oxaloacetate + NADH + H(+). Its function is as follows. Catalyzes the reversible oxidation of malate to oxaloacetate. The protein is Malate dehydrogenase of Xylella fastidiosa (strain M23).